A 126-amino-acid chain; its full sequence is Glycine cleavage system H protein (126 aa).

The 83-residue stretch at 21-103 (TVTVGISDHA…YESGWIARIK (83 aa)) folds into the Lipoyl-binding domain. The residue at position 62 (Lys62) is an N6-lipoyllysine.

It belongs to the GcvH family. The glycine cleavage system is composed of four proteins: P, T, L and H. (R)-lipoate serves as cofactor.

Functionally, the glycine cleavage system catalyzes the degradation of glycine. The H protein shuttles the methylamine group of glycine from the P protein to the T protein. In Aliivibrio fischeri (strain MJ11) (Vibrio fischeri), this protein is Glycine cleavage system H protein.